Here is a 643-residue protein sequence, read N- to C-terminus: MPIITLPDGSQRQFDRPVSVLEVAQDIGAGLAKATIAGRVNGERRDACDVIEQDATLEIITAKDEDGLEIIRHSCAHLLGHAIKQLFPDVKMAIGPTIENGFYYDVDLDRSLTQEDIDAIEKRMLELAKTNYDVVKKRVTWQEARDTFEKRGEPYKMAILDENIERTATPALYHHLEYIDMCRGPHVPNMRFCQHFKLQKVAGAYWRGDSKNKMLQRIYGTAWADKKQLAEYLTRLEEAAKRDHRKIGKALDLYHMQEEAPGMVFWHNDGWTIFRELETFVRTKLKQYDYQEVKGPFMMDRVLWEKTGHWQNYADLMFTTQSENREYAIKPMNCPGHVQIFNQGLKSYRDLPIRMAEFGSCHRNEPSGSLHGLMRVRGFTQDDAHIFCTEDQIESEVTSCIKMVYDIYSTFGFTNIAVKLSTRPENRIGSDEMWDRAEAGLAAALAHNGLEYEIQEGEGAFYGPKIEFALRDCLGREWQCGTVQLDFALPGRLDATYVAEDNSRKTPVMIHRAILGSIERFIGIITEEYAGFFPAWLAPTQAVVMNITDSQADYVQQVVKTLSDAGLRVKADLRNEKVGFKIREHTLRRVPYMLVCGDKEIAEGKVAVRTRKGADLGTFTVEEFAEILKNQVRSRELKLLNEE.

Positions 1-61 (MPIITLPDGS…EQDATLEIIT (61 aa)) constitute a TGS domain. The tract at residues 243–534 (DHRKIGKALD…ITEEYAGFFP (292 aa)) is catalytic. Residues Cys334, His385, and His511 each contribute to the Zn(2+) site.

It belongs to the class-II aminoacyl-tRNA synthetase family. As to quaternary structure, homodimer. It depends on Zn(2+) as a cofactor.

The protein resides in the cytoplasm. The enzyme catalyses tRNA(Thr) + L-threonine + ATP = L-threonyl-tRNA(Thr) + AMP + diphosphate + H(+). Catalyzes the attachment of threonine to tRNA(Thr) in a two-step reaction: L-threonine is first activated by ATP to form Thr-AMP and then transferred to the acceptor end of tRNA(Thr). Also edits incorrectly charged L-seryl-tRNA(Thr). This is Threonine--tRNA ligase from Haemophilus influenzae (strain 86-028NP).